The primary structure comprises 194 residues: Ribonuclease VapC1 (194 aa).

The PINc domain occupies 34 to 134; the sequence is YVIDTSAIIS…TDDYSIQNVA (101 aa). Asp37 and Asp150 together coordinate Mg(2+).

It belongs to the PINc/VapC protein family. Mg(2+) is required as a cofactor.

Functionally, toxic component of a type II toxin-antitoxin (TA) system. An RNase. This Thermoplasma acidophilum (strain ATCC 25905 / DSM 1728 / JCM 9062 / NBRC 15155 / AMRC-C165) protein is Ribonuclease VapC1.